The primary structure comprises 523 residues: MPDMGVFLLATQAVAPPGELLNLALNAGAIAPEGAVLVAMLATLLVDLAGEQAAARWVPPICYAGLGTALVLLAQQWNAPLEPSFLGAFLADNLAISFRAVVALSTLLSLLISWRYAEQSGTPIGEYAAILLAATLGAMLLCGSTDLVSVFVSLETLSVASYLLAGYMKRDARSSEAALKYLLVGSAAAAVFLYGASLLYGLSGTTSLQAIGLALLTSPTPLAALSLVFVLATVAFKIAAVPFHQWTPDVYEGSPTPVVAFLSVGSKAAGFALALRLLVGCFGAFDNQWKLLFTVLAVLSMTLGNVVALAQTSMKRMLAYSSIGQAGFVMIGLVCGTEDGFAAMVLYMAAYLFMNLGAFACIILFSIRTGSDRISDYAGLYQKDPLITLGLSLCLLSLGGIPPMLGFFGKIYLFFAGWADHQYLLVVVGLVTSVVSIYYYISVIKMMVVKEPKEASDVVKSYPSIKWSTIGMPPLRIALVGCVVVTAVGGILSNPLFQWANNAVAGTPLLQEAIALGSQRSIG.

Transmembrane regions (helical) follow at residues 29–49 (AIAP…VDLA), 57–77 (WVPP…AQQW), 94–114 (LAIS…LISW), 123–143 (PIGE…LLCG), 147–167 (LVSV…LAGY), 182–202 (LLVG…LYGL), 223–243 (AALS…AVPF), 255–275 (PTPV…ALAL), 291–311 (LLFT…ALAQ), 317–337 (MLAY…VCGT), 345–365 (VLYM…IILF), 389–409 (LGLS…GFFG), 424–444 (LLVV…ISVI), and 477–497 (IALV…NPLF).

It belongs to the complex I subunit 2 family. As to quaternary structure, NDH-1 can be composed of about 15 different subunits; different subcomplexes with different compositions have been identified which probably have different functions.

The protein resides in the cellular thylakoid membrane. The enzyme catalyses a plastoquinone + NADH + (n+1) H(+)(in) = a plastoquinol + NAD(+) + n H(+)(out). The catalysed reaction is a plastoquinone + NADPH + (n+1) H(+)(in) = a plastoquinol + NADP(+) + n H(+)(out). Its function is as follows. NDH-1 shuttles electrons from an unknown electron donor, via FMN and iron-sulfur (Fe-S) centers, to quinones in the respiratory and/or the photosynthetic chain. The immediate electron acceptor for the enzyme in this species is believed to be plastoquinone. Couples the redox reaction to proton translocation, and thus conserves the redox energy in a proton gradient. Cyanobacterial NDH-1 also plays a role in inorganic carbon-concentration. The protein is NAD(P)H-quinone oxidoreductase subunit 2 of Prochlorococcus marinus (strain MIT 9313).